The primary structure comprises 514 residues: Cilia- and flagella-associated protein 53 (514 aa).

Residues 207–429 (EDRLAKERRE…ERINEGLKEL (223 aa)) adopt a coiled-coil conformation.

The protein belongs to the CFAP53 family. Microtubule inner protein component of sperm flagellar doublet microtubules. Interacts with PIERCE1 and PIERCE2; the interactions link outer dynein arms docking complex (ODA-DC) to the internal microtubule inner proteins (MIP) in cilium axoneme. Interacts with CCDC38. Interacts with CCDC42 and IFT88. Interacts with centriolar satellite proteins PIBF1/CEP90 and PCM1. Interacts with dyneins DNAIC1, DNAIC2 AND DNAH11 and with ODA-DC component ODAD4/TTC25. As to expression, expressed in trachea multiciliated cells.

It is found in the cytoplasm. It localises to the cytoskeleton. Its subcellular location is the cilium axoneme. The protein resides in the flagellum axoneme. The protein localises to the microtubule organizing center. It is found in the centrosome. It localises to the centriolar satellite. Its subcellular location is the spindle pole. Microtubule inner protein (MIP) part of the dynein-decorated doublet microtubules (DMTs) in cilia axoneme, which is required for motile cilia beating. Regulates motility patterns of both 9+0 and 9+2 motile cilia through differential localization and recruitment of axonemal dynein components. Required for centriolar satellite integrity and non-motile cilium assembly. Required for motile cilium formation. Through its role in beating of primary cilia, involved in the establishment of organ laterality during embryogenesis. Required for sperm flagellum biogenesis and is essential for male fertility. This Bos taurus (Bovine) protein is Cilia- and flagella-associated protein 53 (CFAP53).